The chain runs to 537 residues: CTP synthase (537 aa).

The interval 1–268 (MNTKYIFVTG…DNLVCKKLKL (268 aa)) is amidoligase domain. CTP is bound at residue serine 14. Position 14 (serine 14) interacts with UTP. 15 to 20 (SLGKGI) is a binding site for ATP. Tyrosine 55 contributes to the L-glutamine binding site. Aspartate 72 is a binding site for ATP. Positions 72 and 142 each coordinate Mg(2+). Residues 149–151 (DIE), 189–194 (KTKPTQ), and lysine 225 each bind CTP. UTP is bound by residues 189-194 (KTKPTQ) and lysine 225. The Glutamine amidotransferase type-1 domain maps to 293-535 (NIALVGKYVE…IKASLNSKHK (243 aa)). Glycine 355 contacts L-glutamine. The Nucleophile; for glutamine hydrolysis role is filled by cysteine 382. Residues 383-386 (LGMQ), glutamate 406, and arginine 463 contribute to the L-glutamine site. Residues histidine 508 and glutamate 510 contribute to the active site.

This sequence belongs to the CTP synthase family. Homotetramer.

It carries out the reaction UTP + L-glutamine + ATP + H2O = CTP + L-glutamate + ADP + phosphate + 2 H(+). The catalysed reaction is L-glutamine + H2O = L-glutamate + NH4(+). The enzyme catalyses UTP + NH4(+) + ATP = CTP + ADP + phosphate + 2 H(+). It functions in the pathway pyrimidine metabolism; CTP biosynthesis via de novo pathway; CTP from UDP: step 2/2. Its activity is regulated as follows. Allosterically activated by GTP, when glutamine is the substrate; GTP has no effect on the reaction when ammonia is the substrate. The allosteric effector GTP functions by stabilizing the protein conformation that binds the tetrahedral intermediate(s) formed during glutamine hydrolysis. Inhibited by the product CTP, via allosteric rather than competitive inhibition. In terms of biological role, catalyzes the ATP-dependent amination of UTP to CTP with either L-glutamine or ammonia as the source of nitrogen. Regulates intracellular CTP levels through interactions with the four ribonucleotide triphosphates. This Clostridium kluyveri (strain ATCC 8527 / DSM 555 / NBRC 12016 / NCIMB 10680 / K1) protein is CTP synthase.